The primary structure comprises 2167 residues: Beige protein homolog 1 (2167 aa).

Residues lysine 1368–asparagine 1499 enclose the BEACH-type PH domain. Positions serine 1545–lysine 1839 constitute a BEACH domain. Lysine 1667 participates in a covalent cross-link: Glycyl lysine isopeptide (Lys-Gly) (interchain with G-Cter in ubiquitin). WD repeat units lie at residues threonine 1927–serine 1965, glycine 1976–glutamine 2015, threonine 2017–lysine 2054, lysine 2072–tryptophan 2111, and serine 2129–tyrosine 2167.

It is found in the cytoplasm. It localises to the membrane. Its function is as follows. May be involved in protein sorting and cell wall formation. The chain is Beige protein homolog 1 (BPH1) from Saccharomyces cerevisiae (strain ATCC 204508 / S288c) (Baker's yeast).